A 404-amino-acid polypeptide reads, in one-letter code: LL-diaminopimelate aminotransferase (404 aa).

Residues Tyr-15 and Gly-42 each coordinate substrate. Pyridoxal 5'-phosphate is bound by residues Tyr-72, 108-109, Tyr-132, Asn-188, Tyr-219, and 247-249; these read AK and SFS. Residues Lys-109, Tyr-132, and Asn-188 each coordinate substrate. At Lys-250 the chain carries N6-(pyridoxal phosphate)lysine. Positions 258 and 288 each coordinate pyridoxal 5'-phosphate. 2 residues coordinate substrate: Asn-288 and Arg-384.

Belongs to the class-I pyridoxal-phosphate-dependent aminotransferase family. LL-diaminopimelate aminotransferase subfamily. Homodimer. The cofactor is pyridoxal 5'-phosphate.

It carries out the reaction (2S,6S)-2,6-diaminopimelate + 2-oxoglutarate = (S)-2,3,4,5-tetrahydrodipicolinate + L-glutamate + H2O + H(+). The protein operates within amino-acid biosynthesis; L-lysine biosynthesis via DAP pathway; LL-2,6-diaminopimelate from (S)-tetrahydrodipicolinate (aminotransferase route): step 1/1. Involved in the synthesis of meso-diaminopimelate (m-DAP or DL-DAP), required for both lysine and peptidoglycan biosynthesis. Catalyzes the direct conversion of tetrahydrodipicolinate to LL-diaminopimelate. The chain is LL-diaminopimelate aminotransferase from Agathobacter rectalis (strain ATCC 33656 / DSM 3377 / JCM 17463 / KCTC 5835 / VPI 0990) (Eubacterium rectale).